A 133-amino-acid chain; its full sequence is Small ribosomal subunit protein uS8 (133 aa).

Belongs to the universal ribosomal protein uS8 family. Part of the 30S ribosomal subunit.

One of the primary rRNA binding proteins, it binds directly to 16S rRNA central domain where it helps coordinate assembly of the platform of the 30S subunit. The chain is Small ribosomal subunit protein uS8 from Saccharolobus islandicus (strain L.S.2.15 / Lassen #1) (Sulfolobus islandicus).